The primary structure comprises 230 residues: 3-beta-hydroxysteroid-Delta(8),Delta(7)-isomerase (230 aa).

T2 carries the N-acetylthreonine modification. 4 consecutive transmembrane segments (helical) span residues 29–49 (WHILVGLFSFSGVLIVITWLL), 66–86 (LCWFAVCTFIHLVIEGWFSFY), 121–141 (MESVTACLWGPLSLWVVIAFL), and 185–205 (FWFYFVIMNAIWLVIPGILVF). In terms of domain architecture, EXPERA spans 61–204 (GRRLALCWFA…IWLVIPGILV (144 aa)).

The protein belongs to the EBP family. As to expression, expressed in liver.

Its subcellular location is the endoplasmic reticulum membrane. It is found in the nucleus envelope. The protein resides in the cytoplasmic vesicle. It carries out the reaction lathosterol = 5alpha-cholest-8-en-3beta-ol. The catalysed reaction is zymosterol = 5alpha-cholesta-7,24-dien-3beta-ol. The enzyme catalyses 5,6alpha-epoxy-5alpha-cholestan-3beta-ol + H2O = 5alpha-cholestane-3beta,5,6beta-triol. It catalyses the reaction 5,6beta-epoxy-5beta-cholestan-3beta-ol + H2O = 5alpha-cholestane-3beta,5,6beta-triol. It functions in the pathway steroid biosynthesis; cholesterol biosynthesis. With respect to regulation, enzymatic activity is induced by 25-hydroxycholesterol, cholestyramine and lovastatin. Isomerase that catalyzes the conversion of Delta(8)-sterols to their corresponding Delta(7)-isomers. Its function is as follows. Component of the microsomal antiestrogen binding site (AEBS), a multiproteic complex at the ER membrane that consists of an association between EBP and 7-dehydrocholesterol reductase/DHCR7. This complex is responsible for cholesterol-5,6-epoxide hydrolase (ChEH) activity, which consists in the hydration of cholesterol-5,6-epoxides (5,6-EC) into cholestane-3beta,5alpha,6beta-triol (CT). The precise role of each component of this complex has not been described yet. The chain is 3-beta-hydroxysteroid-Delta(8),Delta(7)-isomerase from Rattus norvegicus (Rat).